The following is a 284-amino-acid chain: Tropomyosin (284 aa).

Residues 1–280 (MDAIKKKMQA…SDELDQTFAE (280 aa)) adopt a coiled-coil conformation.

Belongs to the tropomyosin family. In terms of assembly, homodimer.

Functionally, tropomyosin, in association with the troponin complex, plays a central role in the calcium dependent regulation of muscle contraction. This is Tropomyosin from Sinonovacula constricta (Razor clam).